Consider the following 698-residue polypeptide: Phenylalanine aminomutase (L-beta-phenylalanine forming) (698 aa).

Residue tyrosine 80 is the Proton donor/acceptor of the active site. Residues 175–177 (ASG) constitute a cross-link (5-imidazolinone (Ala-Gly)). Serine 176 carries the 2,3-didehydroalanine (Ser) modification. 7 residues coordinate (E)-cinnamate: asparagine 231, glutamine 319, arginine 325, asparagine 355, lysine 427, glutamate 455, and asparagine 458.

The protein belongs to the PAL/histidase family. As to quaternary structure, homotetramer. In terms of processing, contains an active site 4-methylidene-imidazol-5-one (MIO), which is formed autocatalytically by cyclization and dehydration of residues Ala-Ser-Gly.

The protein localises to the cytoplasm. It carries out the reaction L-phenylalanine = L-beta-phenylalanine. It catalyses the reaction L-phenylalanine = (E)-cinnamate + NH4(+). The protein operates within alkaloid biosynthesis; taxol biosynthesis. It functions in the pathway phenylpropanoid metabolism; trans-cinnamate biosynthesis; trans-cinnamate from L-phenylalanine: step 1/1. In terms of biological role, phenylalanine aminomutase that catalyzes the rearrangement of L-phenylalanine to R-beta-phenylalanine. Catalyzes the first committed step in the biosynthesis of the side chain of the alkaloid taxol (paclitaxel), a widely-used compound with antitumor activity. Also has low phenylalanine ammonia-lyase activity. This chain is Phenylalanine aminomutase (L-beta-phenylalanine forming) (pam), found in Taxus canadensis (Canadian yew).